The sequence spans 943 residues: Calcium-activated chloride channel regulator 2 (943 aa).

The N-terminal stretch at 1–31 (MTQRSIAGPICNLKFVTLLVALSSELPFLGA) is a signal peptide. Residues 32 to 901 (GVQLQDNGYN…SDPVPARDYL (870 aa)) lie on the Extracellular side of the membrane. The segment at 54–205 (NQNLISNIKE…CSSDITGIFV (152 aa)) is metalloprotease domain. N-linked (GlcNAc...) asparagine glycosylation is found at N74 and N150. Residue H164 participates in Zn(2+) binding. The active site involves E165. Zn(2+)-binding residues include H168 and D175. N231 carries N-linked (GlcNAc...) asparagine glycosylation. Residues 311–483 (VVCLVLDVSS…NSMIDAFSRI (173 aa)) form the VWFA domain. N-linked (GlcNAc...) asparagine glycosylation is found at N522 and N822. Residues 902 to 922 (ILKGVLTAMGLIGIICLIIVV) form a helical membrane-spanning segment. Over 923 to 943 (THHTLSRKKRADKKENGTKLL) the chain is Cytoplasmic.

Belongs to the CLCR family. The 141 kDa mature form is autoproteolytically cleaved by the metalloprotease domain, producing a 109 kDa form and a 35 kDa form. The cleavage is necessary for calcium-activated chloride channel (CaCC) activation activity. In terms of processing, N-glycosylated. As to expression, expressed in cornea, skin, vagina, esophagus, and larynx (at protein level). Expressed in trachea and mammary gland. Weakly expressed in testis and kidney. Highly expressed in corneal epithelium, colon and trachea. Moderately expressed in brain, urogenital organs, bladder, uterus and prostate. Highly expressed in tissues containing stratified epithelium including cornea, esophagus, larynx, skin and vagina than those tissues which contain only epithelial monolayers. Expressed in normal breast epithelium but not in breast cancer. Highly expressed during epithelial stratification. Expressed in endothelial cells of lung. Expressed selectively in endothelia of small pulmonary arteries, arterioles, and subpleural and interlobular venules.

It is found in the cell membrane. The protein resides in the basal cell membrane. Its subcellular location is the cell junction. It localises to the secreted. In terms of biological role, plays a role in modulating chloride current across the plasma membrane in a calcium-dependent manner, and cell adhesion. Involved in basal cell adhesion and/or stratification of squamous epithelia. May act as a tumor suppressor in breast and colorectal cancer. Plays a key role for cell adhesion in the beginning stages of lung metastasis via the binding to ITGB4. In Homo sapiens (Human), this protein is Calcium-activated chloride channel regulator 2 (CLCA2).